The primary structure comprises 478 residues: MSNNIRIEEDLLGTREVPADAYYGVHTLRAIENFYISNNKISDIPEFVRGMVMVKKAAAMANKELQTIPKSVANAIIAACDEVLNNGKCMDQFPVDVYQGGAGTSVNMNTNEVLANIGLELMGHQKGEYQYLNPNDHVNKCQSTNDAYPTGFRIAVYSSLIKLVDAINQLREGFERKAVEFQDILKMGRTQLQDAVPMTLGQEFRAFSILLKEEVKNIQRTAELLLEVNLGATAIGTGLNTPKEYSPLAVKKLAEVTGFPCVPAEDLIEATSDCGAYVMVHGALKRLAVKMSKICNDLRLLSSGPRAGLNEINLPELQAGSSIMPAKVNPVVPEVVNQVCFKVIGNDTTVTMAAEAGQLQLNVMEPVIGQAMFESVHILTNACYNLLEKCINGITANKEVCEGYVYNSIGIVTYLNPFIGHHNGDIVGKICAETGKSVREVVLERGLLTEAELDDIFSVQNLMHPAYKAKRYTDESEQ.

5 residues coordinate L-aspartate: Thr-104, Ser-143, Thr-144, Asn-145, and Thr-190. Residues 320–329 form an SS loop region; sequence GSSIMPAKVN. Ser-321 serves as the catalytic Proton acceptor. Residues Ser-322 and Lys-327 each contribute to the L-aspartate site.

This sequence belongs to the class-II fumarase/aspartase family. Aspartase subfamily. Homotetramer.

It carries out the reaction L-aspartate = fumarate + NH4(+). Functionally, catalyzes the reversible conversion of L-aspartate to fumarate and ammonia. This is Aspartate ammonia-lyase (aspA) from Escherichia coli O157:H7.